A 367-amino-acid chain; its full sequence is Alcohol dehydrogenase 2 (367 aa).

Zn(2+)-binding residues include Cys48, His74, Cys107, Cys110, Cys113, Cys121, and Cys163. NAD(+) is bound by residues 187–193 (GAGGGLG), Asp212, Lys216, 286–288 (VGI), and Arg361.

The protein belongs to the zinc-containing alcohol dehydrogenase family. As to quaternary structure, homotetramer. Requires Zn(2+) as cofactor.

The protein resides in the cytoplasm. It carries out the reaction a primary alcohol + NAD(+) = an aldehyde + NADH + H(+). It catalyses the reaction a secondary alcohol + NAD(+) = a ketone + NADH + H(+). The protein is Alcohol dehydrogenase 2 (alcB) of Emericella nidulans (strain FGSC A4 / ATCC 38163 / CBS 112.46 / NRRL 194 / M139) (Aspergillus nidulans).